A 251-amino-acid chain; its full sequence is Probable transcriptional regulatory protein Amuc_0709 (251 aa).

Belongs to the TACO1 family.

The protein resides in the cytoplasm. The chain is Probable transcriptional regulatory protein Amuc_0709 from Akkermansia muciniphila (strain ATCC BAA-835 / DSM 22959 / JCM 33894 / BCRC 81048 / CCUG 64013 / CIP 107961 / Muc).